A 739-amino-acid polypeptide reads, in one-letter code: Phosphoribosylformylglycinamidine synthase subunit PurL (739 aa).

His54 is a catalytic residue. ATP is bound by residues Tyr57 and Lys96. Glu98 provides a ligand contact to Mg(2+). Residues 99–102 (SHNH) and Arg121 each bind substrate. His100 acts as the Proton acceptor in catalysis. Residue Asp122 coordinates Mg(2+). Gln245 contacts substrate. Asp273 contributes to the Mg(2+) binding site. Substrate is bound at residue 317-319 (ESQ). Residues Asp500 and Gly537 each coordinate ATP. Asn538 is a binding site for Mg(2+). Substrate is bound at residue Ser540.

It belongs to the FGAMS family. As to quaternary structure, monomer. Part of the FGAM synthase complex composed of 1 PurL, 1 PurQ and 2 PurS subunits.

The protein resides in the cytoplasm. The catalysed reaction is N(2)-formyl-N(1)-(5-phospho-beta-D-ribosyl)glycinamide + L-glutamine + ATP + H2O = 2-formamido-N(1)-(5-O-phospho-beta-D-ribosyl)acetamidine + L-glutamate + ADP + phosphate + H(+). It functions in the pathway purine metabolism; IMP biosynthesis via de novo pathway; 5-amino-1-(5-phospho-D-ribosyl)imidazole from N(2)-formyl-N(1)-(5-phospho-D-ribosyl)glycinamide: step 1/2. Part of the phosphoribosylformylglycinamidine synthase complex involved in the purines biosynthetic pathway. Catalyzes the ATP-dependent conversion of formylglycinamide ribonucleotide (FGAR) and glutamine to yield formylglycinamidine ribonucleotide (FGAM) and glutamate. The FGAM synthase complex is composed of three subunits. PurQ produces an ammonia molecule by converting glutamine to glutamate. PurL transfers the ammonia molecule to FGAR to form FGAM in an ATP-dependent manner. PurS interacts with PurQ and PurL and is thought to assist in the transfer of the ammonia molecule from PurQ to PurL. The sequence is that of Phosphoribosylformylglycinamidine synthase subunit PurL from Bacillus cereus (strain G9842).